Consider the following 190-residue polypeptide: Vexin (190 aa).

The disordered stretch occupies residues 88–156; sequence AEKKASRFSR…DEATLPLTAH (69 aa). Positions 117–133 are enriched in polar residues; sequence TDKQNAPTVPASPSSYE. A compositionally biased stretch (basic and acidic residues) spans 136 to 149; sequence GCREQRPENPKDEA.

This sequence belongs to the vexin family. As to expression, expressed in differentiating progenitors in the developing central nervous system (CNS).

It is found in the cell membrane. Its subcellular location is the nucleus. Its function is as follows. Required for neurogenesis in the neural plate and retina. Cooperates with cell cycle inhibitor cdknx/p27(xic1) to enhance neurogenesis and increase the levels of the neuronal determination factor neurog2/X-ngngr-1. In Xenopus laevis (African clawed frog), this protein is Vexin.